The chain runs to 337 residues: Glyceraldehyde-3-phosphate dehydrogenase 2 (337 aa).

Residues 11-12 (RI), Asp35, Arg79, and Thr121 contribute to the NAD(+) site. D-glyceraldehyde 3-phosphate-binding positions include 153 to 155 (SCT), Thr184, Arg199, 212 to 213 (TG), and Arg235. Cys154 serves as the catalytic Nucleophile. Asn317 contacts NAD(+).

It belongs to the glyceraldehyde-3-phosphate dehydrogenase family. Homotetramer.

It is found in the cytoplasm. It catalyses the reaction D-glyceraldehyde 3-phosphate + phosphate + NADP(+) = (2R)-3-phospho-glyceroyl phosphate + NADPH + H(+). The enzyme catalyses D-glyceraldehyde 3-phosphate + phosphate + NAD(+) = (2R)-3-phospho-glyceroyl phosphate + NADH + H(+). It participates in carbohydrate degradation; glycolysis; pyruvate from D-glyceraldehyde 3-phosphate: step 1/5. In terms of biological role, involved in photosynthetic carbon assimilation. Catalyzes the NAD(P)-dependent oxidative phosphorylation of glyceraldehyde 3-phosphate (G3P) to 1,3-bisphosphoglycerate (BPG). The first reaction step involves the formation of a hemiacetal intermediate between G3P and a cysteine residue, and this hemiacetal intermediate is then oxidized to a thioester, with concomitant reduction of NAD to NADH. The reduced NADH is then exchanged with the second NAD, and the thioester is attacked by a nucleophilic inorganic phosphate to produce BPG. It can use both NADP and NAD. The protein is Glyceraldehyde-3-phosphate dehydrogenase 2 (gap2) of Synechocystis sp. (strain ATCC 27184 / PCC 6803 / Kazusa).